A 598-amino-acid polypeptide reads, in one-letter code: DNA (cytosine-5)-methyltransferase DRM2 (598 aa).

Disordered stretches follow at residues 1 to 49 (MVDW…NGKA) and 114 to 146 (EVDE…GDED). The region spanning 42–91 (PQDANGKANGSGALVAEFMGMGFPKEMILKAIKEIGDTDTEQLLELLLTY) is the UBA 1 domain. Residues 114–128 (EVDEEEDDTNWDEYD) show a composition bias toward acidic residues. Residues 150-194 (EMSEKDEKMKSLVNMGFPEDEAKMAIDRCGLDAPVAVLVDSIYAS) form the UBA 2 domain. Residues 227 to 252 (GSKKRKRYGSGPSGNQVPFDGSHEEP) form a disordered region. Residues 272–598 (VHRNLPDQAL…EHVKATMSAV (327 aa)) enclose the SAM-dependent MTase DRM-type domain.

It belongs to the class I-like SAM-binding methyltransferase superfamily. DRM-methyltransferase family. In terms of assembly, interacts (via UBA domains) with EIF4A.

Its subcellular location is the nucleus. The catalysed reaction is a 2'-deoxycytidine in DNA + S-adenosyl-L-methionine = a 5-methyl-2'-deoxycytidine in DNA + S-adenosyl-L-homocysteine + H(+). Its function is as follows. Involved in de novo DNA methylation. Required for CpG and non-CpG methylation. Required for normal establishment and maintenance of RNA-directed DNA methylation (RdDM) mediated by small interfering RNAs (siRNAs). Regulates proper plant development in both vegetative and reproductive stages through DNA methylation. In Oryza sativa subsp. japonica (Rice), this protein is DNA (cytosine-5)-methyltransferase DRM2.